The following is a 202-amino-acid chain: Coiled-coil domain-containing protein 85B (202 aa).

Methionine 1 bears the N-acetylmethionine mark. Coiled coils occupy residues 43–90 (GRLM…ERQR) and 118–147 (QKLA…LGEE). Residues 148–202 (WGPRGGPSGAGGSGAGPAPELALPPCGPRDLGDGSSSTGSVGSPDQLPLACSPDD) form a disordered region. Over residues 150–162 (PRGGPSGAGGSGA) the composition is skewed to gly residues. The segment covering 180 to 190 (DGSSSTGSVGS) has biased composition (low complexity).

This sequence belongs to the CCDC85 family. In terms of assembly, interacts with CEBPB. Interacts with EURL. May interact with CEBPD. Interacts with MCRS1. Interacts with TCF7L2; competes with CTNNB1. Interacts with ANKRD26. Interacts with the beta-catenin family proteins ARVCF, CTNND1, CTNND2 and PKP4. (Microbial infection) Interacts with the viral phosphoprotein hepatitis delta antigen (HDAG); this interaction affects hepatitis delta virus (HDV) genomic replication in intact cells. Widely expressed including liver.

It is found in the nucleus. Its subcellular location is the cytoplasm. The protein resides in the cytoskeleton. The protein localises to the microtubule organizing center. It localises to the centrosome. It is found in the cell junction. Its subcellular location is the adherens junction. Its function is as follows. Functions as a transcriptional repressor. May inhibit the activity of CTNNB1 in a TP53-dependent manner and thus regulate cell growth. May function in adipocyte differentiation, negatively regulating mitotic clonal expansion. Plays a role in cell-cell adhesion and epithelium development through its interaction with proteins of the beta-catenin family. (Microbial infection) Plays a role in hepatitis delta virus (HDV) genomic replication. In Homo sapiens (Human), this protein is Coiled-coil domain-containing protein 85B (CCDC85B).